The sequence spans 413 residues: Tyrosine--tRNA ligase (413 aa).

Tyrosine 34 lines the L-tyrosine pocket. The 'HIGH' region signature appears at 39–48; sequence PTSHSLTVGH. Positions 164 and 168 each coordinate L-tyrosine. A 'KMSKS' region motif is present at residues 225–229; it reads KFGKS. An ATP-binding site is contributed by lysine 228. An S4 RNA-binding domain is found at 347–413; sequence ILLVDALVQT…GKKNNALIVF (67 aa).

Belongs to the class-I aminoacyl-tRNA synthetase family. TyrS type 1 subfamily. In terms of assembly, homodimer.

It localises to the cytoplasm. It carries out the reaction tRNA(Tyr) + L-tyrosine + ATP = L-tyrosyl-tRNA(Tyr) + AMP + diphosphate + H(+). Catalyzes the attachment of tyrosine to tRNA(Tyr) in a two-step reaction: tyrosine is first activated by ATP to form Tyr-AMP and then transferred to the acceptor end of tRNA(Tyr). The chain is Tyrosine--tRNA ligase from Onion yellows phytoplasma (strain OY-M).